A 580-amino-acid polypeptide reads, in one-letter code: Jasmonoyl--L-amino acid synthetase JAR6 (580 aa).

Residue serine 100 participates in ATP binding. Jasmonate is bound at residue serine 103. Residues methionine 120, threonine 123, glycine 164, asparagine 169, and 332–337 (GSSEGW) contribute to the ATP site. 167–171 (TTNVY) is an an L-alpha-amino acid binding site. 329–332 (ADYG) contributes to the jasmonate binding site. An an L-alpha-amino acid-binding site is contributed by 534–538 (KILDH).

The protein belongs to the IAA-amido conjugating enzyme family.

The catalysed reaction is a jasmonate + an L-alpha-amino acid + ATP = a jasmonyl-L-amino acid + AMP + diphosphate + H(+). Functionally, catalyzes the synthesis of jasmonate-amino acid conjugates by adenylation. Catalyzes the conjugation of jasmonate (JA) to Ile, Leu and Val. Catalyzes the conjugation of JA to Ile that may mediate defense signaling and resistance to the herbivore Manduca sexta caterpillars. In Nicotiana attenuata (Coyote tobacco), this protein is Jasmonoyl--L-amino acid synthetase JAR6 (JAR6).